Consider the following 261-residue polypeptide: HLA class II histocompatibility antigen, DM alpha chain (261 aa).

The N-terminal stretch at 1–26 is a signal peptide; the sequence is MGHEQNQGAALLQMLPLLWLLPHSWA. Residues 27 to 124 form an alpha-1 region; that stretch reads VPEAPTPMWP…KLDGKIPVSR (98 aa). The Lumenal portion of the chain corresponds to 27–233; the sequence is VPEAPTPMWP…PSDLLENVLC (207 aa). The N-linked (GlcNAc...) asparagine glycan is linked to N41. Cystine bridges form between C50-C105 and C147-C202. The Ig-like C1-type domain maps to 121 to 215; that stretch reads PVSRGFPIAE…HEIDRYTAIA (95 aa). The tract at residues 125-217 is alpha-2; that stretch reads GFPIAEVFTL…IDRYTAIAYW (93 aa). The connecting peptide stretch occupies residues 218-233; that stretch reads VPRNALPSDLLENVLC. Residues 234 to 254 traverse the membrane as a helical segment; it reads GVAFGLGVLGIIVGIVLIIYF. Residues 255-261 are Cytoplasmic-facing; that stretch reads RKPCSGD.

Belongs to the MHC class II family. Heterodimer of an alpha chain (DMA) and a beta chain (DMB). Interacts with MHCII; this interaction mediates rapid selection of high-affinity peptides in a pH-dependent manner, with an optimum at pH 5.5.

Its subcellular location is the late endosome membrane. It localises to the lysosome membrane. Its function is as follows. Plays a critical role in catalyzing the release of class II-associated invariant chain peptide (CLIP) from newly synthesized MHC class II molecules and freeing the peptide binding site for acquisition of antigenic peptides. In B-cells, the interaction between HLA-DM and MHC class II molecules is regulated by HLA-DO. This is HLA class II histocompatibility antigen, DM alpha chain (HLA-DMA) from Homo sapiens (Human).